Consider the following 63-residue polypeptide: Jingdongin-1 (63 aa).

A signal peptide spans 1 to 22 (MLTLKKSMLLLFFLGTINLSLC). The propeptide occupies 23–44 (EQERDADEEERRDDDEMDVEVE). An intrachain disulfide couples Cys-57 to Cys-63.

As to expression, expressed by the skin glands.

The protein resides in the secreted. The synthetic peptide has antimicrobial activity against Gram-negative bacterium B.dysenteriae (MIC=35 ug/ml), against Gram-positive bacteria S.aureus ATCC 2592 (MIC=4.7 ug/ml) and B.subtilis ATCC 6633 (MIC=9.38 ug/ml) and against fungus C.albicans (MIC=18.75 ug/ml). Has no activity against Gram-negative bacterium E.coli ATCC 25922 but exhibits low hemolytic activity at concentrations up to 200 ug/ml. The sequence is that of Jingdongin-1 from Amolops jingdongensis (Chinese torrent frog).